We begin with the raw amino-acid sequence, 349 residues long: MEAHNASAPFNFTLPPNFGKRPTDLALSVILVFMLFFIMLSLGCTMEFSKIKAHLWKPKGLAIALVAQYGIMPLTAFVLGKVFRLKNIEALAILVCGCSPGGNLSNVFSLAMKGDMNLSIVMTTCSTFCALGMMPLLLYIYSRGIYDGDLKDKVPYKGIVISLVLVLIPCTIGIVLKSKRPQYMRYVIKGGMIIILLCSVAVTVLSAINVGKSIMFAMTPLLIATSSLMPFIGFLLGYVLSALFCLNGRCRRTVSMETGCQNVQLCSTILNVAFPPEVIGPLFFFPLLYMIFQLGEGLLLIAIFWCYEKFKTPKDKTKMIYTAATTEETIPGALGNGTYKGEDCSPCTA.

Topologically, residues 1–22 are extracellular; that stretch reads MEAHNASAPFNFTLPPNFGKRP. 2 N-linked (GlcNAc...) asparagine glycosylation sites follow: N5 and N11. A helical membrane pass occupies residues 23-44; sequence TDLALSVILVFMLFFIMLSLGC. At 45–47 the chain is on the cytoplasmic side; sequence TME. Residues 48-83 form a helical membrane-spanning segment; the sequence is FSKIKAHLWKPKGLAIALVAQYGIMPLTAFVLGKVF. The Extracellular portion of the chain corresponds to 84-86; the sequence is RLK. The discontinuously helical transmembrane segment at 87–112 threads the bilayer; that stretch reads NIEALAILVCGCSPGGNLSNVFSLAM. The Cytoplasmic portion of the chain corresponds to 113–115; the sequence is KGD. The chain crosses the membrane as a helical span at residues 116–142; the sequence is MNLSIVMTTCSTFCALGMMPLLLYIYS. At 143-156 the chain is on the extracellular side; sequence RGIYDGDLKDKVPY. Residues 157–179 form a helical membrane-spanning segment; it reads KGIVISLVLVLIPCTIGIVLKSK. Topologically, residues 180 to 183 are cytoplasmic; that stretch reads RPQY. The helical transmembrane segment at 184-217 threads the bilayer; that stretch reads MRYVIKGGMIIILLCSVAVTVLSAINVGKSIMFA. The Extracellular segment spans residues 218–219; it reads MT. A helical transmembrane segment spans residues 220-243; sequence PLLIATSSLMPFIGFLLGYVLSAL. The Cytoplasmic segment spans residues 244 to 247; the sequence is FCLN. Residues 248–273 traverse the membrane as a discontinuously helical segment; sequence GRCRRTVSMETGCQNVQLCSTILNVA. Residues 274 to 280 are Extracellular-facing; sequence FPPEVIG. Residues 281 to 311 traverse the membrane as a helical segment; that stretch reads PLFFFPLLYMIFQLGEGLLLIAIFWCYEKFK. Residues 312 to 349 lie on the Cytoplasmic side of the membrane; that stretch reads TPKDKTKMIYTAATTEETIPGALGNGTYKGEDCSPCTA.

Belongs to the bile acid:sodium symporter (BASS) (TC 2.A.28) family. In terms of assembly, (Microbial infection) Interacts with the myristoylated pre-S1 domain of hepatitis B virus large envelope protein; myristoylation is essential for this interaction. In terms of tissue distribution, expressed in liver. Expressed in placental trophoblasts.

Its subcellular location is the cell membrane. The enzyme catalyses taurocholate(out) + 2 Na(+)(out) = taurocholate(in) + 2 Na(+)(in). It carries out the reaction cholate(out) + 2 Na(+)(out) = cholate(in) + 2 Na(+)(in). The catalysed reaction is estrone 3-sulfate(out) + 2 Na(+)(out) = estrone 3-sulfate(in) + 2 Na(+)(in). It catalyses the reaction taurochenodeoxycholate(out) + 2 Na(+)(out) = taurochenodeoxycholate(in) + 2 Na(+)(in). The enzyme catalyses tauroursodeoxycholate(out) + 2 Na(+)(out) = tauroursodeoxycholate(in) + 2 Na(+)(in). It carries out the reaction glycocholate(out) + 2 Na(+)(out) = glycocholate(in) + 2 Na(+)(in). The catalysed reaction is tauronorcholate(out) + 2 Na(+)(out) = tauronorcholate(in) + 2 Na(+)(in). It catalyses the reaction taurodeoxycholate(out) + 2 Na(+)(out) = taurodeoxycholate(in) + 2 Na(+)(in). The enzyme catalyses tauroallocholate(out) + 2 Na(+)(out) = tauroallocholate(in) + 2 Na(+)(in). It carries out the reaction taurohyodeoxycholate(out) + 2 Na(+)(out) = taurohyodeoxycholate(in) + 2 Na(+)(in). The catalysed reaction is taurohyocholate(out) + 2 Na(+)(out) = taurohyocholate(in) + 2 Na(+)(in). It catalyses the reaction tauro-beta-muricholate(out) + 2 Na(+)(out) = tauro-beta-muricholate(in) + 2 Na(+)(in). Its activity is regulated as follows. The transport of bile acids is sodium-dependent. As a major transporter of conjugated bile salts from plasma into the hepatocyte, it plays a key role in the enterohepatic circulation of bile salts necessary for the solubilization and absorption of dietary fat and fat-soluble vitamins. It is strictly dependent on the extracellular presence of sodium. It exhibits broad substrate specificity and transports various bile acids, such as taurocholate, cholate, as well as non-bile acid organic compounds, such as estrone sulfate. Works collaboratively with the ileal transporter (NTCP2), the organic solute transporter (OST), and the bile salt export pump (BSEP), to ensure efficacious biological recycling of bile acids during enterohepatic circulation. In terms of biological role, (Microbial infection) Acts as an entry receptor for hepatitis B virus (HBV). The recognition for human SLC10A1/NTCP is highly specific. In Homo sapiens (Human), this protein is Hepatic sodium/bile acid cotransporter (SLC10A1).